We begin with the raw amino-acid sequence, 211 residues long: ATP-dependent Clp protease proteolytic subunit 1 (211 aa).

Ser-107 serves as the catalytic Nucleophile. Residue His-132 is part of the active site.

The protein belongs to the peptidase S14 family. As to quaternary structure, fourteen ClpP subunits assemble into 2 heptameric rings which stack back to back to give a disk-like structure with a central cavity, resembling the structure of eukaryotic proteasomes.

The protein resides in the cytoplasm. It carries out the reaction Hydrolysis of proteins to small peptides in the presence of ATP and magnesium. alpha-casein is the usual test substrate. In the absence of ATP, only oligopeptides shorter than five residues are hydrolyzed (such as succinyl-Leu-Tyr-|-NHMec, and Leu-Tyr-Leu-|-Tyr-Trp, in which cleavage of the -Tyr-|-Leu- and -Tyr-|-Trp bonds also occurs).. In terms of biological role, cleaves peptides in various proteins in a process that requires ATP hydrolysis. Has a chymotrypsin-like activity. Plays a major role in the degradation of misfolded proteins. In Mycolicibacterium paratuberculosis (strain ATCC BAA-968 / K-10) (Mycobacterium paratuberculosis), this protein is ATP-dependent Clp protease proteolytic subunit 1.